A 164-amino-acid chain; its full sequence is Lectin (164 aa).

A signal peptide spans 1-15; that stretch reads TVATILTILASTCMA. In terms of domain architecture, Bulb-type lectin spans 16 to 125; it reads RNVLVNNEGL…DIWSTGTYRK (110 aa). A disulfide bond links Cys-44 and Cys-68.

As to quaternary structure, homotetramer. Post-translationally, not glycosylated.

Mannose-specific lectin. Induces a Th1-type immune response in vitro. Causes a 4-fold increase in the proliferation of murine thymocytes and a significant increase in the production of nitric oxide at 24 hours in a macrophage cell line. Stimulates the production of the pro-inflammatory cytokines TNF and IL12 by rat peritoneal macrophages in a dose-dependent manner and of the cytokines IFNG and IL2 in murine thymocytes. Has hemagglutination activity towards rabbit erythrocytes. This Allium cepa (Onion) protein is Lectin.